The primary structure comprises 258 residues: NAD kinase (258 aa).

The active-site Proton acceptor is aspartate 45. NAD(+)-binding positions include 45–46 (DG), 117–118 (NE), aspartate 147, alanine 155, 158–163 (TAYNYS), and alanine 182.

It belongs to the NAD kinase family. A divalent metal cation is required as a cofactor.

It localises to the cytoplasm. It catalyses the reaction NAD(+) + ATP = ADP + NADP(+) + H(+). Involved in the regulation of the intracellular balance of NAD and NADP, and is a key enzyme in the biosynthesis of NADP. Catalyzes specifically the phosphorylation on 2'-hydroxyl of the adenosine moiety of NAD to yield NADP. The sequence is that of NAD kinase from Xanthomonas campestris pv. campestris (strain 8004).